We begin with the raw amino-acid sequence, 346 residues long: Dihydroorotase (346 aa).

2 residues coordinate Zn(2+): H17 and H19. Substrate contacts are provided by residues 19 to 21 and N45; that span reads HVR. K102, H139, and H177 together coordinate Zn(2+). At K102 the chain carries N6-carboxylysine. H139 contributes to the substrate binding site. Position 222 (L222) interacts with substrate. D250 is a Zn(2+) binding site. D250 is a catalytic residue. Residues H254 and A266 each coordinate substrate.

This sequence belongs to the metallo-dependent hydrolases superfamily. DHOase family. Class II DHOase subfamily. As to quaternary structure, homodimer. Requires Zn(2+) as cofactor.

The enzyme catalyses (S)-dihydroorotate + H2O = N-carbamoyl-L-aspartate + H(+). It participates in pyrimidine metabolism; UMP biosynthesis via de novo pathway; (S)-dihydroorotate from bicarbonate: step 3/3. In terms of biological role, catalyzes the reversible cyclization of carbamoyl aspartate to dihydroorotate. This is Dihydroorotase from Delftia acidovorans (strain DSM 14801 / SPH-1).